A 157-amino-acid polypeptide reads, in one-letter code: Cyclic pyranopterin monophosphate synthase (157 aa).

Residues 74–76 and 112–113 contribute to the substrate site; these read MCH and ME. D127 is an active-site residue.

The protein belongs to the MoaC family. As to quaternary structure, homohexamer; trimer of dimers.

It carries out the reaction (8S)-3',8-cyclo-7,8-dihydroguanosine 5'-triphosphate = cyclic pyranopterin phosphate + diphosphate. Its pathway is cofactor biosynthesis; molybdopterin biosynthesis. Its function is as follows. Catalyzes the conversion of (8S)-3',8-cyclo-7,8-dihydroguanosine 5'-triphosphate to cyclic pyranopterin monophosphate (cPMP). In Sulfurovum sp. (strain NBC37-1), this protein is Cyclic pyranopterin monophosphate synthase.